Reading from the N-terminus, the 200-residue chain is Proteasome subunit beta 2 (200 aa).

Residues 1 to 10 (MSDQLELMTG) constitute a propeptide, removed in mature form; by autocatalysis. The active-site Nucleophile is the Thr-11.

The protein belongs to the peptidase T1B family. As to quaternary structure, the 20S proteasome core is composed of 14 alpha and 14 beta subunits that assemble into four stacked heptameric rings, resulting in a barrel-shaped structure. The two inner rings, each composed of seven catalytic beta subunits, are sandwiched by two outer rings, each composed of seven alpha subunits. The catalytic chamber with the active sites is on the inside of the barrel. Has a gated structure, the ends of the cylinder being occluded by the N-termini of the alpha-subunits. Is capped at one or both ends by the proteasome regulatory ATPase, PAN.

It is found in the cytoplasm. It carries out the reaction Cleavage of peptide bonds with very broad specificity.. With respect to regulation, the formation of the proteasomal ATPase PAN-20S proteasome complex, via the docking of the C-termini of PAN into the intersubunit pockets in the alpha-rings, triggers opening of the gate for substrate entry. Interconversion between the open-gate and close-gate conformations leads to a dynamic regulation of the 20S proteasome proteolysis activity. Component of the proteasome core, a large protease complex with broad specificity involved in protein degradation. The chain is Proteasome subunit beta 2 from Caldivirga maquilingensis (strain ATCC 700844 / DSM 13496 / JCM 10307 / IC-167).